A 523-amino-acid chain; its full sequence is GMP synthase [glutamine-hydrolyzing] (523 aa).

One can recognise a Glutamine amidotransferase type-1 domain in the interval 9–198 (PVLVVDYGAQ…LTEIAGLEQN (190 aa)). Cysteine 86 serves as the catalytic Nucleophile. Active-site residues include histidine 172 and glutamate 174. A GMPS ATP-PPase domain is found at 199-397 (WTAANIAEEL…LGLPEVIVAR (199 aa)). 227 to 233 (SGGVDSA) contributes to the ATP binding site.

Homodimer.

It carries out the reaction XMP + L-glutamine + ATP + H2O = GMP + L-glutamate + AMP + diphosphate + 2 H(+). It functions in the pathway purine metabolism; GMP biosynthesis; GMP from XMP (L-Gln route): step 1/1. Its function is as follows. Catalyzes the synthesis of GMP from XMP. The polypeptide is GMP synthase [glutamine-hydrolyzing] (Corynebacterium efficiens (strain DSM 44549 / YS-314 / AJ 12310 / JCM 11189 / NBRC 100395)).